A 698-amino-acid chain; its full sequence is Elongation factor G (698 aa).

The 276-residue stretch at 10-285 (DKTRNIGIMA…GVVDYLPSPL (276 aa)) folds into the tr-type G domain. GTP-binding positions include 19–26 (AHIDAGKT), 83–87 (DTPGH), and 137–140 (NKMD).

It belongs to the TRAFAC class translation factor GTPase superfamily. Classic translation factor GTPase family. EF-G/EF-2 subfamily.

The protein resides in the cytoplasm. Catalyzes the GTP-dependent ribosomal translocation step during translation elongation. During this step, the ribosome changes from the pre-translocational (PRE) to the post-translocational (POST) state as the newly formed A-site-bound peptidyl-tRNA and P-site-bound deacylated tRNA move to the P and E sites, respectively. Catalyzes the coordinated movement of the two tRNA molecules, the mRNA and conformational changes in the ribosome. This chain is Elongation factor G, found in Lactobacillus johnsonii (strain CNCM I-12250 / La1 / NCC 533).